Reading from the N-terminus, the 379-residue chain is MATAGKVIKCKAAVAWEAAKPLVIEEVEVAPPQAMEVRVKILFTSLCHTDVYFWEAKGQTPVFPRIFGHEAGGIVESVGEGVTDLAPGDHVLPVFTGECKECAHCKSAESNMCDLLRINTDRGVMIGDGKSRFSINGKPIYHFVGTSTFSEYTVMHVGCVAKINPAAPLDKVCVLSCGISTGLGATINVAKPPKGSTVAIFGLGAVGLAAAEGARIAGASRIIGIDLNANRFEEARKFGCTEFVNPKDHDKPVQQVLAEMTNGGVDRSVECTGNINAMIQAFECVHDGWGVAVLVGVPHKDAEFKTHPMNFLNERTLKGTFFGNYKPRTDLPNVVELYMKKELEVEKFITHSVPFSEINTAFDLMHKGEGIRCIIRMEN.

Residues cysteine 47, threonine 49, histidine 69, cysteine 99, cysteine 102, cysteine 105, cysteine 113, and cysteine 177 each coordinate Zn(2+). The an alcohol site is built by threonine 49 and histidine 69. Residue threonine 49 coordinates NAD(+). NAD(+)-binding positions include 202–207, aspartate 226, arginine 231, threonine 272, valine 295, 295–297, phenylalanine 322, and arginine 372; these read GLGAVG and VGV.

Belongs to the zinc-containing alcohol dehydrogenase family. Homodimer. It depends on Zn(2+) as a cofactor.

Its subcellular location is the cytoplasm. It catalyses the reaction a primary alcohol + NAD(+) = an aldehyde + NADH + H(+). It carries out the reaction a secondary alcohol + NAD(+) = a ketone + NADH + H(+). This Oryza sativa subsp. indica (Rice) protein is Alcohol dehydrogenase 1 (ADH1).